Reading from the N-terminus, the 522-residue chain is MSLLNCENSCGSSQSESDCCVAMASSCSAATKDDSVGGTASTGNLSSSFMEDIQGYDVEFDPPLESKYECPICLMALREAVQTPCGHRFCKACIIKSIRDAGHKCPVDNEILLENQLFPDNFAKREILSLMVKCPNEGCLHKMELRHLEDHQAHCEFALVDCPQCQRPFQKFHINIHILKDCPRRQVSCDNCAALVAFEDKEIHDQNCPLANVICEYCNTILIREQMPNHYDLDCPTAPIPCTFSTFGCHEKMQRNHLARHLQENTQSHMRMLAQAVHSLSLIPDSGYVSEVRNFQETIHQLEGRLVRQDHQIRELTAKMETQSTYVSELKRTIRTLEDKVAEIEAQQCNGIYIWKIGNFGMHLKCQEEEKPVVIHSPGFYTGKPGYKLCMRLHLQLPTAQRCANYISLFVHTMQGEYDSHLPWPFQGTIRLTILDQSEAPVRQNHEEIMDAKPDLLAFQRPTIPRNPKGFGYVTFMHLEALRQRTFIKDDTLLVRCEVSTRFDMGSLRREGFQPRSTDSGV.

The segment at 1–354 is interaction with TAX1BP1; sequence MSLLNCENSC…EAQQCNGIYI (354 aa). Residues 70-109 form an RING-type; degenerate zinc finger; that stretch reads CPICLMALREAVQTPCGHRFCKACIIKSIRDAGHKCPVDN. Residue lysine 124 forms a Glycyl lysine isopeptide (Lys-Gly) (interchain with G-Cter in SUMO); alternate linkage. A Glycyl lysine isopeptide (Lys-Gly) (interchain with G-Cter in ubiquitin); alternate cross-link involves residue lysine 124. Residue lysine 142 forms a Glycyl lysine isopeptide (Lys-Gly) (interchain with G-Cter in SUMO) linkage. 2 TRAF-type zinc fingers span residues 150–202 and 203–259; these read DHQA…EDKE and IHDQ…NHLA. Residues 288 to 348 are a coiled coil; it reads YVSEVRNFQE…DKVAEIEAQQ (61 aa). Lysine 319 is covalently cross-linked (Glycyl lysine isopeptide (Lys-Gly) (interchain with G-Cter in ubiquitin)). The region spanning 350 to 499 is the MATH domain; the sequence is NGIYIWKIGN…DDTLLVRCEV (150 aa). Residues 355 to 522 form an interaction with TANK region; the sequence is WKIGNFGMHL…FQPRSTDSGV (168 aa). Lysine 453 is covalently cross-linked (Glycyl lysine isopeptide (Lys-Gly) (interchain with G-Cter in SUMO)).

This sequence belongs to the TNF receptor-associated factor family. A subfamily. In terms of assembly, homotrimer. Homooligomer. N-terminal region is dimeric while C-terminal region is trimeric; maybe providing a mode of oligomerization. Upon IL1B treatment, forms a complex with PELI1, IRAK1, IRAK4 and MYD88; this complex recruits MAP3K7/TAK1, TAB1 and TAB2 to mediate NF-kappa-B activation. Direct binding of SMAD6 to PELI1 prevents the complex formation and hence negatively regulates IL1R-TLR signaling and eventually NF-kappa-B-mediated gene expression. Binds to TNFRSF5/CD40 and TNFRSF11A/RANK. Associates with NGFR, TNFRSF17, IRAK2, IRAK3, RIPK2, MAP3K1, MAP3K5, MAP3K14, CSK, TRAF, TRAF-interacting protein TRIP and TNF receptor associated protein TDP2. Interacts with IL17R. Interacts with SQSTM1 bridging NTRK1 and NGFR. Forms a ternary complex with SQSTM1 and PRKCZ. Interacts with PELI2 and PELI3. Binds UBE2V1. Interacts with TAX1BP1; this interaction mediates deubiquitination of TRAF6 and inhibition of NF-kappa-B activation. Interacts with ZNF675. Interacts with ARRB1 and ARRB2. Interacts with MAP3K7 and TAB1/MAP3K7IP1; during IL-1 signaling. Interacts with UBE2N. Interacts with TGFBR1, HDAC1 and RANGAP1. Interacts with AKT1, AKT2 and AKT3. Interacts (via TRAF domains) with NUMBL (via C-terminal). Interacts with RBCK1. Interacts with LIMD1 (via LIM domains). Interacts with RSAD2/viperin. Interacts (via C-terminus) with EIF2AK2/PKR (via the kinase catalytic domain). Interacts with ZFAND5. Interacts with IL1RL1. Interacts with TRAFD1. Interacts with AJUBA. Interacts with MAVS/IPS1. Interacts (via TRAF domains) with DYNC2I2 (via WD domains). Interacts with IFIT3 (via N-terminus). Interacts with TICAM2. Interacts with CARD14. Interacts with CD40 and MAP3K8; the interaction is required for ERK activation. Interacts with TICAM1 and this interaction is enhanced in the presence of WDFY1. Interacts with TANK; this interaction increases in response to DNA damage. Interacts with USP10; this interaction increases in response to DNA damage. Interacts with ZC3H12A; this interaction increases in response to DNA damage and is stimulated by TANK. Interacts with WDFY3. Interacts with TRIM13. Interacts with GPS2. Interacts (via C-terminus) with SASH1. Interacts with LRRC19. Interacts with IL17RA and TRAF3IP2. Interacts with TOMM70. Interacts with AMBRA1; interaction is required to mediate 'Lys-63'-linked ubiquitination of ULK1. Interacts with CRBN; this interaction inhibits TLR4-mediated signaling by preventing TRAF6-mediated ubiquitination of ECSIT. Post-translationally, sumoylated on Lys-124, Lys-142 and Lys-453 with SUMO1. Polyubiquitinated on Lys-124 by TRAF3IP2; after cell stimulation with IL17A. Polyubiquitinated; after cell stimulation with IL1B or TGFB. This ligand-induced cell stimulation leads to dimerization/oligomerization of TRAF6 molecules, followed by auto-ubiquitination which involves UBE2N and UBE2V1 and leads to TRAF6 activation. This 'Lys-63' site-specific poly-ubiquitination appears to be associated with the activation of signaling molecules. Endogenous autoubiquitination occurs only for the cytoplasmic form. Deubiquitinated by USP10 in a TANK-dependent manner, leading to the negative regulation of NF-kappa-B signaling upon DNA damage. LRRC19 induces 'Lys-63' ubiquitination. Ubiquitinated at Lys-319 by the SCF(FBXL2) complex, leading to its degradation by the proteasome.

The protein localises to the cytoplasm. It localises to the cell cortex. Its subcellular location is the nucleus. The protein resides in the lipid droplet. It catalyses the reaction S-ubiquitinyl-[E2 ubiquitin-conjugating enzyme]-L-cysteine + [acceptor protein]-L-lysine = [E2 ubiquitin-conjugating enzyme]-L-cysteine + N(6)-ubiquitinyl-[acceptor protein]-L-lysine.. Its pathway is protein modification; protein ubiquitination. E3 ubiquitin ligase that, together with UBE2N and UBE2V1, mediates the synthesis of 'Lys-63'-linked-polyubiquitin chains conjugated to proteins, such as ECSIT, IKBKG, IRAK1, AKT1 and AKT2. Also mediates ubiquitination of free/unanchored polyubiquitin chain that leads to MAP3K7 activation. Leads to the activation of NF-kappa-B and JUN. Seems to also play a role in dendritic cells (DCs) maturation and/or activation. Represses c-Myb-mediated transactivation, in B-lymphocytes. Adapter protein that seems to play a role in signal transduction initiated via TNF receptor, IL-1 receptor and IL-17 receptor. Regulates osteoclast differentiation by mediating the activation of adapter protein complex 1 (AP-1) and NF-kappa-B, in response to RANK-L stimulation. Together with MAP3K8, mediates CD40 signals that activate ERK in B-cells and macrophages, and thus may play a role in the regulation of immunoglobulin production. Acts as a regulator of the JNK and NF-kappa-B signaling pathways by initiating assembly of heterotypic 'Lys-63'-/'Lys-48'-linked branched ubiquitin chains that are then recognized by TAB2: TRAF6 catalyzes initial 'Lys-63'-linked-polyubiquitin chains that are then branched via 'Lys-48'-linked polyubiquitin by HUWE1. 'Lys-63'-/'Lys-48'-linked branched ubiquitin chains protect 'Lys-63'-linkages from CYLD deubiquitination. Also participates in the TCR signaling by ubiquitinating LAT. The protein is TNF receptor-associated factor 6 (TRAF6) of Macaca mulatta (Rhesus macaque).